The chain runs to 332 residues: DnAJ-like protein slr0093 (332 aa).

A J domain is found at 6–75 (FKDYYQILGV…RQKYDQFGRY (70 aa)).

This Synechocystis sp. (strain ATCC 27184 / PCC 6803 / Kazusa) protein is DnAJ-like protein slr0093.